We begin with the raw amino-acid sequence, 747 residues long: Cysteine--tRNA ligase, cytoplasmic (747 aa).

The segment at 1-25 is disordered; sequence MTDSWERGKGRRTQPPWSAPNTQAQ. Residues 15-25 are compositionally biased toward polar residues; it reads PPWSAPNTQAQ. A Zn(2+)-binding site is contributed by C54. Residue G55 coordinates L-cysteine. The short motif at 56–66 is the 'HIGH' region element; that stretch reads PTVYDASHMGH. Residue T95 coordinates L-cysteine. The 'KIIK' region signature appears at 100-103; it reads KIIK. The Zn(2+) site is built by C347, H372, and E376. H372 contacts L-cysteine. The 'KMSKS' region signature appears at 405 to 409; it reads KMSKS. K408 contributes to the ATP binding site. A compositionally biased stretch (basic and acidic residues) spans 651–683; that stretch reads EEKRKAEEEKQRKKEEAARKKQQQEAAKLEKMK. The segment at 651-722 is disordered; it reads EEKRKAEEEK…KELSKGQSKK (72 aa).

Belongs to the class-I aminoacyl-tRNA synthetase family. As to quaternary structure, homodimer. Requires Zn(2+) as cofactor.

The protein resides in the cytoplasm. It catalyses the reaction tRNA(Cys) + L-cysteine + ATP = L-cysteinyl-tRNA(Cys) + AMP + diphosphate. Functionally, catalyzes the ATP-dependent ligation of cysteine to tRNA(Cys). The chain is Cysteine--tRNA ligase, cytoplasmic (cars1) from Xenopus tropicalis (Western clawed frog).